The following is a 479-amino-acid chain: Ribosomal RNA small subunit methyltransferase F (479 aa).

S-adenosyl-L-methionine contacts are provided by residues 125–131, Glu-149, Asp-176, and Asp-194; that span reads AAAPGSK. The active-site Nucleophile is Cys-247.

It belongs to the class I-like SAM-binding methyltransferase superfamily. RsmB/NOP family.

The protein localises to the cytoplasm. The enzyme catalyses cytidine(1407) in 16S rRNA + S-adenosyl-L-methionine = 5-methylcytidine(1407) in 16S rRNA + S-adenosyl-L-homocysteine + H(+). Specifically methylates the cytosine at position 1407 (m5C1407) of 16S rRNA. The sequence is that of Ribosomal RNA small subunit methyltransferase F from Salmonella newport (strain SL254).